The primary structure comprises 412 residues: Mitochondrial distribution and morphology protein 12 (412 aa).

The 410-residue stretch at 1-410 folds into the SMP-LTD domain; the sequence is MSIDLEWAKL…FPNFHTLVMG (410 aa). Disordered stretches follow at residues 66-96, 108-136, 166-238, and 314-354; these read EDDE…DGYE, YTEG…SPTD, QGSG…QQEN, and PAGD…KPLP. The span at 220–238 shows a compositional bias: low complexity; the sequence is NQPVFPSQQPQQQQPQQEN.

The protein belongs to the MDM12 family. In terms of assembly, component of the ER-mitochondria encounter structure (ERMES) or MDM complex, composed of MMM1, MDM10, MDM12 and MDM34. An MMM1 homodimer associates with one molecule of MDM12 on each side in a pairwise head-to-tail manner, and the SMP-LTD domains of MMM1 and MDM12 generate a continuous hydrophobic tunnel for phospholipid trafficking.

The protein resides in the mitochondrion outer membrane. Its subcellular location is the endoplasmic reticulum membrane. Component of the ERMES/MDM complex, which serves as a molecular tether to connect the endoplasmic reticulum (ER) and mitochondria. Components of this complex are involved in the control of mitochondrial shape and protein biogenesis, and function in nonvesicular lipid trafficking between the ER and mitochondria. MDM12 is required for the interaction of the ER-resident membrane protein MMM1 and the outer mitochondrial membrane-resident beta-barrel protein MDM10. The MDM12-MMM1 subcomplex functions in the major beta-barrel assembly pathway that is responsible for biogenesis of all mitochondrial outer membrane beta-barrel proteins, and acts in a late step after the SAM complex. The MDM10-MDM12-MMM1 subcomplex further acts in the TOM40-specific pathway after the action of the MDM12-MMM1 complex. Essential for establishing and maintaining the structure of mitochondria and maintenance of mtDNA nucleoids. In Coprinopsis cinerea (strain Okayama-7 / 130 / ATCC MYA-4618 / FGSC 9003) (Inky cap fungus), this protein is Mitochondrial distribution and morphology protein 12.